The following is a 144-amino-acid chain: Granulocyte-macrophage colony-stimulating factor (144 aa).

A signal peptide spans 1–17; that stretch reads MWLQGLLLLGTVACSIS. The O-linked (GalNAc...) serine glycan is linked to S24. T27 is a glycosylation site (O-linked (GalNAc...) threonine). Residues N44 and N54 are each glycosylated (N-linked (GlcNAc...) asparagine). 2 disulfides stabilise this stretch: C71/C113 and C105/C138.

This sequence belongs to the GM-CSF family. As to quaternary structure, monomer. The signaling GM-CSF receptor complex is a dodecamer of two head-to-head hexamers of two alpha, two beta, and two ligand subunits.

The protein resides in the secreted. In terms of biological role, cytokine that stimulates the growth and differentiation of hematopoietic precursor cells from various lineages, including granulocytes, macrophages, eosinophils and erythrocytes. The chain is Granulocyte-macrophage colony-stimulating factor (CSF2) from Chlorocebus aethiops (Green monkey).